A 444-amino-acid polypeptide reads, in one-letter code: Zeaxanthin 4-ketolase (444 aa).

Positions 408 to 444 (VAGGSSSGGGGEGGKPGAGEHGLLQRQRQLAPVGVMA) are disordered. A compositionally biased stretch (gly residues) spans 412–427 (SSSGGGGEGGKPGAGE).

The enzyme catalyses all-trans-adonixanthin + 2 AH2 + 2 O2 = all-trans-(3S,3'S)-astaxanthin + 2 A + 3 H2O. The catalysed reaction is all-trans-zeaxanthin + 2 AH2 + 2 O2 = all-trans-adonixanthin + 2 A + 3 H2O. It carries out the reaction echinenone + 2 AH2 + 2 O2 = canthaxanthin + 2 A + 3 H2O. It catalyses the reaction all-trans-beta-carotene + 2 AH2 + 2 O2 = echinenone + 2 A + 3 H2O. It functions in the pathway carotenoid biosynthesis; astaxanthin biosynthesis. Functionally, involved in the biosynthesis of ketocarotenoids which are powerful anti-oxidative molecules. Catalyzes the conversion of zeaxanthin to astaxanthin via adonixanthin. Catalyzes the conversion of beta-carotene to canthaxanthin via echinenone. In Chlamydomonas reinhardtii (Chlamydomonas smithii), this protein is Zeaxanthin 4-ketolase.